A 431-amino-acid polypeptide reads, in one-letter code: Adenylosuccinate synthetase (431 aa).

Residues 13 to 19 and 41 to 43 each bind GTP; these read GDEGKGK and GHT. Asp-14 (proton acceptor) is an active-site residue. Mg(2+) contacts are provided by Asp-14 and Gly-41. Residues 14-17, 39-42, Thr-130, Arg-144, Gln-225, Thr-240, and Arg-304 contribute to the IMP site; these read DEGK and NAGH. His-42 serves as the catalytic Proton donor. 300 to 306 contacts substrate; sequence ATTGRER. Residues Arg-306, 332–334, and 415–417 contribute to the GTP site; these read KLD and STG.

This sequence belongs to the adenylosuccinate synthetase family. As to quaternary structure, homodimer. Mg(2+) is required as a cofactor.

The protein localises to the cytoplasm. It catalyses the reaction IMP + L-aspartate + GTP = N(6)-(1,2-dicarboxyethyl)-AMP + GDP + phosphate + 2 H(+). Its pathway is purine metabolism; AMP biosynthesis via de novo pathway; AMP from IMP: step 1/2. Its function is as follows. Plays an important role in the de novo pathway of purine nucleotide biosynthesis. Catalyzes the first committed step in the biosynthesis of AMP from IMP. In Colwellia psychrerythraea (strain 34H / ATCC BAA-681) (Vibrio psychroerythus), this protein is Adenylosuccinate synthetase.